A 273-amino-acid polypeptide reads, in one-letter code: 4-hydroxy-tetrahydrodipicolinate reductase (273 aa).

Residues 12 to 17 and Glu-38 each bind NAD(+); that span reads GAGGRM. Arg-39 is a binding site for NADP(+). NAD(+) is bound by residues 102–104 and 126–129; these read GTT and AANF. Residue His-159 is the Proton donor/acceptor of the active site. His-160 contributes to the (S)-2,3,4,5-tetrahydrodipicolinate binding site. Lys-163 serves as the catalytic Proton donor. 169 to 170 contacts (S)-2,3,4,5-tetrahydrodipicolinate; sequence GT.

Belongs to the DapB family. In terms of assembly, homotetramer.

It is found in the cytoplasm. The catalysed reaction is (S)-2,3,4,5-tetrahydrodipicolinate + NAD(+) + H2O = (2S,4S)-4-hydroxy-2,3,4,5-tetrahydrodipicolinate + NADH + H(+). It catalyses the reaction (S)-2,3,4,5-tetrahydrodipicolinate + NADP(+) + H2O = (2S,4S)-4-hydroxy-2,3,4,5-tetrahydrodipicolinate + NADPH + H(+). It participates in amino-acid biosynthesis; L-lysine biosynthesis via DAP pathway; (S)-tetrahydrodipicolinate from L-aspartate: step 4/4. Its function is as follows. Catalyzes the conversion of 4-hydroxy-tetrahydrodipicolinate (HTPA) to tetrahydrodipicolinate. This is 4-hydroxy-tetrahydrodipicolinate reductase from Pectobacterium carotovorum subsp. carotovorum (strain PC1).